Consider the following 525-residue polypeptide: MIARQSSVRGASRGFSSGSAIAGGVKRVAFSSGSMSGGAGRCSSGGFGSRSLYNLGGHKSISMSVAGSCQGGGYGGAGGFGVGGYGAGFGAGGFGGGFGGSFNGRGGPGFPVCPAGGIQEVTINQSLLTPLQVEIDPEIQKIRTAEREQIKTLNNKFASFIDKVRFLEQQNKVLETKWNLLQQQTTTTSPKSLDPFFETYINALRKNLDTLSNDKGRLQSELKMMQDSVEDFKTKYEEEINKRTAAENDFVVLKKDVDAAYMIKVELEAKMESLKDEINFTRVLYEAELAQMQTHVSDTSVVLSMDNNRNLDLDGIIAEVRAQYEDIARKSKAEVESWYQIKVQQLQMSADQHGDSLKTTKNEISELNRMIQRLRAEIENIKKQSQTLQASVADAEQRGELALKDAYSKRAELETALQKAKEDLARLLRDYQALMNVKLALDVEIATYRKLLEGEECRMSGECKSAVSISVVGGSASIGGSGLGLGSGFCSGSGSGSGFGFGGGIYGGSGSKITSSATITKRSPR.

The head stretch occupies residues 1–145 (MIARQSSVRG…DPEIQKIRTA (145 aa)). Residue Arg-13 is modified to Omega-N-methylarginine. The interval 146 to 181 (EREQIKTLNNKFASFIDKVRFLEQQNKVLETKWNLL) is coil 1A. In terms of domain architecture, IF rod spans 146–459 (EREQIKTLNN…KLLEGEECRM (314 aa)). Positions 182–200 (QQQTTTTSPKSLDPFFETY) are linker 1. The coil 1B stretch occupies residues 201–292 (INALRKNLDT…VLYEAELAQM (92 aa)). The linker 12 stretch occupies residues 293–316 (QTHVSDTSVVLSMDNNRNLDLDGI). Residues 317–455 (IAEVRAQYED…ATYRKLLEGE (139 aa)) are coil 2. Positions 456 to 524 (ECRMSGECKS…SSATITKRSP (69 aa)) are tail.

The protein belongs to the intermediate filament family. Heterotetramer of two type I and two type II keratins. Keratin-4 is generally associated with keratin-13. Expressed in the dorsal and ventral epithelium of the tongue. Highest expression levels are detected in the suprabasal layer with low levels detected in the basal cell layer. Within the suprabasal layer expression is highest in the spinous cells, decreases in the granular cells and is not detected in the stratum corneum.

This Mus musculus (Mouse) protein is Keratin, type II cytoskeletal 4 (Krt4).